We begin with the raw amino-acid sequence, 70 residues long: Conotoxin Im23.4 (70 aa).

Residues 1–22 (MIMRMTLTLFVLVVMTAASASG) form the signal peptide. The propeptide occupies 23–30 (DALTEAKR). Cystine bridges form between Cys34–Cys41, Cys45–Cys53, and Cys54–Cys69.

This sequence belongs to the conotoxin K superfamily. As to expression, expressed by the venom duct.

It is found in the secreted. Functionally, probable neurotoxin. The protein is Conotoxin Im23.4 of Conus imperialis (Imperial cone).